The following is a 95-amino-acid chain: Small ribosomal subunit protein bS21 (95 aa).

Residues 55–95 (RKLARKKMQREGLLPMKPKPVFGAGPGAGRGGPGAGARPPR) form a disordered region. Residues 78–89 (AGPGAGRGGPGA) are compositionally biased toward gly residues.

This sequence belongs to the bacterial ribosomal protein bS21 family.

The sequence is that of Small ribosomal subunit protein bS21 from Nitrobacter hamburgensis (strain DSM 10229 / NCIMB 13809 / X14).